We begin with the raw amino-acid sequence, 111 residues long: UPF0060 membrane protein HCH_03337 (111 aa).

4 helical membrane-spanning segments follow: residues 8 to 28, 33 to 53, 65 to 85, and 88 to 108; these read LLFA…WLVI, SLWL…LLTL, YGGM…GVGL, and FDFL…LQPI.

The protein belongs to the UPF0060 family.

It is found in the cell inner membrane. The polypeptide is UPF0060 membrane protein HCH_03337 (Hahella chejuensis (strain KCTC 2396)).